Here is a 497-residue protein sequence, read N- to C-terminus: Glycerol kinase (497 aa).

Residue Thr11 participates in ADP binding. 3 residues coordinate ATP: Thr11, Thr12, and Ser13. Thr11 provides a ligand contact to sn-glycerol 3-phosphate. Arg15 is an ADP binding site. Residues Arg81, Glu82, Tyr134, and Asp244 each contribute to the sn-glycerol 3-phosphate site. Residues Arg81, Glu82, Tyr134, Asp244, and Gln245 each contribute to the glycerol site. Residues Thr266 and Gly309 each coordinate ADP. ATP is bound by residues Thr266, Gly309, Gln313, and Gly410. ADP is bound by residues Gly410 and Asn414.

The protein belongs to the FGGY kinase family.

It carries out the reaction glycerol + ATP = sn-glycerol 3-phosphate + ADP + H(+). The protein operates within polyol metabolism; glycerol degradation via glycerol kinase pathway; sn-glycerol 3-phosphate from glycerol: step 1/1. Inhibited by fructose 1,6-bisphosphate (FBP). Functionally, key enzyme in the regulation of glycerol uptake and metabolism. Catalyzes the phosphorylation of glycerol to yield sn-glycerol 3-phosphate. In Fusobacterium nucleatum subsp. nucleatum (strain ATCC 25586 / DSM 15643 / BCRC 10681 / CIP 101130 / JCM 8532 / KCTC 2640 / LMG 13131 / VPI 4355), this protein is Glycerol kinase.